A 330-amino-acid polypeptide reads, in one-letter code: Phenylalanine--tRNA ligase alpha subunit (330 aa).

E246 contributes to the Mg(2+) binding site.

The protein belongs to the class-II aminoacyl-tRNA synthetase family. Phe-tRNA synthetase alpha subunit type 1 subfamily. Tetramer of two alpha and two beta subunits. Requires Mg(2+) as cofactor.

It is found in the cytoplasm. It carries out the reaction tRNA(Phe) + L-phenylalanine + ATP = L-phenylalanyl-tRNA(Phe) + AMP + diphosphate + H(+). This is Phenylalanine--tRNA ligase alpha subunit from Campylobacter jejuni subsp. doylei (strain ATCC BAA-1458 / RM4099 / 269.97).